A 730-amino-acid polypeptide reads, in one-letter code: Hepatocyte growth factor (730 aa).

The signal sequence occupies residues 1 to 31 (MWVTKLLPLLVLQQLLLHLLLLPVAVPRAEG). A Pyrrolidone carboxylic acid modification is found at glutamine 32. Positions 37-123 (NTLHEFKKSA…HEFDLYENKD (87 aa)) constitute a PAN domain. 8 cysteine pairs are disulfide-bonded: cysteine 70/cysteine 96, cysteine 74/cysteine 84, cysteine 128/cysteine 206, cysteine 149/cysteine 189, cysteine 177/cysteine 201, cysteine 211/cysteine 288, cysteine 232/cysteine 271, and cysteine 260/cysteine 283. Kringle domains are found at residues 128 to 206 (CIIG…IPQC) and 211 to 288 (CMTC…IKMC). Asparagine 294 carries N-linked (GlcNAc...) asparagine glycosylation. 11 cysteine pairs are disulfide-bonded: cysteine 305–cysteine 383, cysteine 326–cysteine 365, cysteine 354–cysteine 377, cysteine 391–cysteine 469, cysteine 412–cysteine 452, cysteine 440–cysteine 464, cysteine 487–cysteine 606, cysteine 519–cysteine 535, cysteine 614–cysteine 681, cysteine 644–cysteine 660, and cysteine 671–cysteine 699. 2 Kringle domains span residues 305–383 (CIQG…IPKC) and 391–469 (CYRG…IFRC). Asparagine 402 is a glycosylation site (N-linked (GlcNAc...) asparagine). In terms of domain architecture, Peptidase S1 spans 495–723 (VVNGIPTRTN…YAKWIHKIIL (229 aa)). Residues asparagine 568 and asparagine 655 are each glycosylated (N-linked (GlcNAc...) asparagine).

The protein belongs to the peptidase S1 family. Plasminogen subfamily. As to quaternary structure, dimer of an alpha chain and a beta chain linked by a disulfide bond. Interacts with SRPX2; the interaction increases HGF mitogenic activity. Post-translationally, the single-chain precursor undergoes proteolytic processing by TMPRSS13 resulting in an active two-chain form. The single-chain precursor undergoes proteolytic processing by HGFAC resulting in an active two-chain form.

In terms of biological role, potent mitogen for mature parenchymal hepatocyte cells, seems to be a hepatotrophic factor, and acts as a growth factor for a broad spectrum of tissues and cell types. Activating ligand for the receptor tyrosine kinase MET by binding to it and promoting its dimerization. Activates MAPK signaling following TMPRSS13 cleavage and activation. This Canis lupus familiaris (Dog) protein is Hepatocyte growth factor (HGF).